The chain runs to 73 residues: UPF0235 protein PERMA_1406 (73 aa).

Belongs to the UPF0235 family.

In Persephonella marina (strain DSM 14350 / EX-H1), this protein is UPF0235 protein PERMA_1406.